The chain runs to 260 residues: MFDIGVNLTSSQFAKDRDDIVTRAFAAGVNGLLITGTNLRESQQAQKLARHYPHCWSTAGVHPHDSSQWQAATEEAIIELAAQPEVVAIGECGLDFNRNFSTPEEQERAFVAQLRIAAELNMPVFMHCRDAHERFITLLEPWLEKLPGAVLHCFTGTREEMQACVARGIYIGITGWVCDERRGLELRELLPLIPAEKLLIETDAPYLLPRDLTPKPTSRRNEPAYLPHILQRIAQWRGEDAACLAATTDTNVKTLFGISF.

E91, H127, and H152 together coordinate a divalent metal cation.

Belongs to the metallo-dependent hydrolases superfamily. TatD-type hydrolase family. TatD subfamily. Monomer. The cofactor is Mg(2+).

The protein localises to the cytoplasm. Its function is as follows. 3'-5' exonuclease that prefers single-stranded DNA and RNA. May play a role in the H(2)O(2)-induced DNA damage repair. The polypeptide is 3'-5' ssDNA/RNA exonuclease TatD (Escherichia fergusonii (strain ATCC 35469 / DSM 13698 / CCUG 18766 / IAM 14443 / JCM 21226 / LMG 7866 / NBRC 102419 / NCTC 12128 / CDC 0568-73)).